Consider the following 576-residue polypeptide: Arginine--tRNA ligase (576 aa).

Residues 126–136 (ANPTGPMHIGH) carry the 'HIGH' region motif.

The protein belongs to the class-I aminoacyl-tRNA synthetase family. As to quaternary structure, monomer.

It localises to the cytoplasm. It catalyses the reaction tRNA(Arg) + L-arginine + ATP = L-arginyl-tRNA(Arg) + AMP + diphosphate. The chain is Arginine--tRNA ligase from Rickettsia bellii (strain OSU 85-389).